The chain runs to 340 residues: MVEQITDKLGRPIRDLRLSVTDRCNFRCDYCMPKEIFGDDFVFLPKDELLTFDEMVRIAQVYTQLGVKKIRITGGEPLLRRDLDKLIYQLNQLEGVEDIGLTTNGLLLKKHGQKLYDAGLRRINVSLDAIDDAVFQAINNRNIKASTILQQIDYAVAIGFQVKVNVVVQKGVNDDQIVPMVQYFKDKDVQIRFIEFMDVGNDNGWDFSKVVSKDEMLEMIEQNFDIEPVAPKYYGEVAKYYQHKDNKAQFGLITSVSQSFCSTCTRARLSSDGKFYGCLFSTVDGFNVKSFMRNGATDNELFEQFKALWNIRDDRYSDERTEQTVANRKRKKINMNYIGG.

The Radical SAM core domain maps to 8 to 227 (KLGRPIRDLR…EMIEQNFDIE (220 aa)). R17 lines the GTP pocket. 2 residues coordinate [4Fe-4S] cluster: C24 and C28. Y30 contributes to the S-adenosyl-L-methionine binding site. C31 lines the [4Fe-4S] cluster pocket. Position 71 (R71) interacts with GTP. G75 provides a ligand contact to S-adenosyl-L-methionine. GTP is bound at residue T102. Position 126 (S126) interacts with S-adenosyl-L-methionine. Residue K163 coordinates GTP. Residue M197 coordinates S-adenosyl-L-methionine. C261 and C264 together coordinate [4Fe-4S] cluster. 266 to 268 (RAR) provides a ligand contact to GTP. Residue C278 coordinates [4Fe-4S] cluster.

It belongs to the radical SAM superfamily. MoaA family. In terms of assembly, monomer and homodimer. The cofactor is [4Fe-4S] cluster.

The catalysed reaction is GTP + AH2 + S-adenosyl-L-methionine = (8S)-3',8-cyclo-7,8-dihydroguanosine 5'-triphosphate + 5'-deoxyadenosine + L-methionine + A + H(+). The protein operates within cofactor biosynthesis; molybdopterin biosynthesis. Functionally, catalyzes the cyclization of GTP to (8S)-3',8-cyclo-7,8-dihydroguanosine 5'-triphosphate. This is GTP 3',8-cyclase from Staphylococcus saprophyticus subsp. saprophyticus (strain ATCC 15305 / DSM 20229 / NCIMB 8711 / NCTC 7292 / S-41).